We begin with the raw amino-acid sequence, 145 residues long: Toxin Res (145 aa).

This sequence belongs to the MbcT/ParT/Res family. As to quaternary structure, homodimer. Forms a complex with cognate antitoxin Xre; the 2 toxin molecules dimerize and each contacts an Xre homodimer. Most Res-Xre contacts are between the antitoxin molecule closest to the toxin.

Functionally, toxic component of a type II toxin-antitoxin (TA) system. Expression in E.coli inhibits cell growth. In vivo it is probably neutralized by cognate antitoxin Xre; this has not been shown upon expression in E.coli. Probably depletes intracellular NAD(+). In Pseudomonas putida (strain ATCC 47054 / DSM 6125 / CFBP 8728 / NCIMB 11950 / KT2440), this protein is Toxin Res.